Here is a 116-residue protein sequence, read N- to C-terminus: Large ribosomal subunit protein bL19 (116 aa).

It belongs to the bacterial ribosomal protein bL19 family.

This protein is located at the 30S-50S ribosomal subunit interface and may play a role in the structure and function of the aminoacyl-tRNA binding site. The polypeptide is Large ribosomal subunit protein bL19 (Pseudomonas savastanoi pv. phaseolicola (strain 1448A / Race 6) (Pseudomonas syringae pv. phaseolicola (strain 1448A / Race 6))).